The following is a 611-amino-acid chain: tRNA uridine 5-carboxymethylaminomethyl modification enzyme MnmG (611 aa).

FAD is bound by residues 8–13, valine 120, and serine 175; that span reads GAGHAG. 268-282 is a binding site for NAD(+); sequence GPRYCPSIEDKIVRF. Position 365 (glutamine 365) interacts with FAD.

Belongs to the MnmG family. In terms of assembly, homodimer. Heterotetramer of two MnmE and two MnmG subunits. FAD serves as cofactor.

The protein localises to the cytoplasm. In terms of biological role, NAD-binding protein involved in the addition of a carboxymethylaminomethyl (cmnm) group at the wobble position (U34) of certain tRNAs, forming tRNA-cmnm(5)s(2)U34. In Mycoplasmoides gallisepticum (strain R(low / passage 15 / clone 2)) (Mycoplasma gallisepticum), this protein is tRNA uridine 5-carboxymethylaminomethyl modification enzyme MnmG.